A 237-amino-acid polypeptide reads, in one-letter code: Beta-glucanase (237 aa).

The first 23 residues, 1–23 (MKKKSCFTLVTTFAFSLIFSVSA), serve as a signal peptide directing secretion. The GH16 domain occupies 28–237 (VFWEPLSYFN…EYDWVKYTSN (210 aa)). A disulfide bond links cysteine 55 and cysteine 84. Glutamate 128 functions as the Nucleophile in the catalytic mechanism. The Proton donor role is filled by glutamate 132.

The protein belongs to the glycosyl hydrolase 16 family.

It catalyses the reaction Hydrolysis of (1-&gt;4)-beta-D-glucosidic linkages in beta-D-glucans containing (1-&gt;3)- and (1-&gt;4)-bonds.. The sequence is that of Beta-glucanase from Paenibacillus macerans (Bacillus macerans).